We begin with the raw amino-acid sequence, 431 residues long: Glutamate-1-semialdehyde 2,1-aminomutase (431 aa).

An N6-(pyridoxal phosphate)lysine modification is found at Lys269.

It belongs to the class-III pyridoxal-phosphate-dependent aminotransferase family. HemL subfamily. Homodimer. Pyridoxal 5'-phosphate is required as a cofactor.

The protein resides in the cytoplasm. The catalysed reaction is (S)-4-amino-5-oxopentanoate = 5-aminolevulinate. Its pathway is porphyrin-containing compound metabolism; protoporphyrin-IX biosynthesis; 5-aminolevulinate from L-glutamyl-tRNA(Glu): step 2/2. This chain is Glutamate-1-semialdehyde 2,1-aminomutase, found in Francisella tularensis subsp. holarctica (strain FTNF002-00 / FTA).